Here is a 394-residue protein sequence, read N- to C-terminus: Quinolinate synthase (394 aa).

The iminosuccinate site is built by His57 and Ser74. Cys121 contacts [4Fe-4S] cluster. Iminosuccinate-binding positions include 153–155 (YMN) and Ser174. Cys250 serves as a coordination point for [4Fe-4S] cluster. Residues 276–278 (HPE) and Thr293 each bind iminosuccinate. Cys340 provides a ligand contact to [4Fe-4S] cluster.

This sequence belongs to the quinolinate synthase family. Type 3 subfamily. [4Fe-4S] cluster serves as cofactor.

The protein resides in the cytoplasm. The catalysed reaction is iminosuccinate + dihydroxyacetone phosphate = quinolinate + phosphate + 2 H2O + H(+). It functions in the pathway cofactor biosynthesis; NAD(+) biosynthesis; quinolinate from iminoaspartate: step 1/1. In terms of biological role, catalyzes the condensation of iminoaspartate with dihydroxyacetone phosphate to form quinolinate. The protein is Quinolinate synthase of Nocardioides sp. (strain ATCC BAA-499 / JS614).